The following is a 269-amino-acid chain: SF-assemblin (269 aa).

The interval 1–23 is disordered; that stretch reads MSISPGRSFSPMRASGLTGITSA. Positions 1 to 24 are nonhelical region; sequence MSISPGRSFSPMRASGLTGITSAG. The segment at 25 to 269 is rod; sequence PTAKLEHVSE…LQEGLKLVST (245 aa). A coiled-coil region spans residues 98-144; sequence AERSAAQHVDMQNSLKQAVDSLSNRLQDLHSLVREEREQRRNDIEHL.

Belongs to the SF-assemblin family.

The protein resides in the cytoplasm. The protein localises to the cytoskeleton. Major component of the striated microtubule-associated fibers (SMAFs; system-I-fibers). In Chlamydomonas moewusii (Chlamydomonas eugametos), this protein is SF-assemblin.